Here is a 347-residue protein sequence, read N- to C-terminus: NADH-ubiquinone oxidoreductase chain 2 (347 aa).

Helical transmembrane passes span 1–21, 25–45, 59–79, 96–116, 122–142, 150–170, 201–221, 242–262, 274–294, and 326–346; these read MNPL…TIVM, HWLV…PVLM, YFLT…INLI, IIMT…FWVP, IQLS…ISIL, NLNL…WGGL, ALLN…VFML, TALL…GFLP, NSVI…YFYM, and LSPL…LTLL.

It belongs to the complex I subunit 2 family. Core subunit of respiratory chain NADH dehydrogenase (Complex I) which is composed of 45 different subunits. Interacts with TMEM242.

Its subcellular location is the mitochondrion inner membrane. It carries out the reaction a ubiquinone + NADH + 5 H(+)(in) = a ubiquinol + NAD(+) + 4 H(+)(out). Core subunit of the mitochondrial membrane respiratory chain NADH dehydrogenase (Complex I) which catalyzes electron transfer from NADH through the respiratory chain, using ubiquinone as an electron acceptor. Essential for the catalytic activity and assembly of complex I. This is NADH-ubiquinone oxidoreductase chain 2 from Eidolon helvum (Straw-colored fruit bat).